Consider the following 512-residue polypeptide: ATP synthase subunit alpha (512 aa).

Residue 169-176 (GDRKTGKT) coordinates ATP.

Belongs to the ATPase alpha/beta chains family. As to quaternary structure, F-type ATPases have 2 components, CF(1) - the catalytic core - and CF(0) - the membrane proton channel. CF(1) has five subunits: alpha(3), beta(3), gamma(1), delta(1), epsilon(1). CF(0) has three main subunits: a(1), b(2) and c(9-12). The alpha and beta chains form an alternating ring which encloses part of the gamma chain. CF(1) is attached to CF(0) by a central stalk formed by the gamma and epsilon chains, while a peripheral stalk is formed by the delta and b chains.

It localises to the cell membrane. The catalysed reaction is ATP + H2O + 4 H(+)(in) = ADP + phosphate + 5 H(+)(out). Its function is as follows. Produces ATP from ADP in the presence of a proton gradient across the membrane. The alpha chain is a regulatory subunit. This is ATP synthase subunit alpha from Limosilactobacillus fermentum (strain NBRC 3956 / LMG 18251) (Lactobacillus fermentum).